We begin with the raw amino-acid sequence, 311 residues long: Porphobilinogen deaminase (311 aa).

Residue cysteine 242 is modified to S-(dipyrrolylmethanemethyl)cysteine.

The protein belongs to the HMBS family. As to quaternary structure, monomer. Requires dipyrromethane as cofactor.

It carries out the reaction 4 porphobilinogen + H2O = hydroxymethylbilane + 4 NH4(+). It participates in porphyrin-containing compound metabolism; protoporphyrin-IX biosynthesis; coproporphyrinogen-III from 5-aminolevulinate: step 2/4. Its function is as follows. Tetrapolymerization of the monopyrrole PBG into the hydroxymethylbilane pre-uroporphyrinogen in several discrete steps. In Neisseria meningitidis serogroup A / serotype 4A (strain DSM 15465 / Z2491), this protein is Porphobilinogen deaminase (hemC).